A 90-amino-acid polypeptide reads, in one-letter code: YcgL domain-containing protein plu2139 (90 aa).

The YcgL domain maps to 1 to 85; the sequence is MICAIYSSPK…PVENLMNAHL (85 aa).

The sequence is that of YcgL domain-containing protein plu2139 from Photorhabdus laumondii subsp. laumondii (strain DSM 15139 / CIP 105565 / TT01) (Photorhabdus luminescens subsp. laumondii).